An 89-amino-acid chain; its full sequence is Small ribosomal subunit protein bS20 (89 aa).

The interval 1-27 is disordered; that stretch reads MANIKSAKKDSIISEERRKKNASQRSK. The span at 7–18 shows a compositional bias: basic and acidic residues; the sequence is AKKDSIISEERR.

This sequence belongs to the bacterial ribosomal protein bS20 family.

Binds directly to 16S ribosomal RNA. This chain is Small ribosomal subunit protein bS20, found in Buchnera aphidicola subsp. Schizaphis graminum (strain Sg).